Here is a 304-residue protein sequence, read N- to C-terminus: Protoheme IX farnesyltransferase (304 aa).

The next 7 membrane-spanning stretches (helical) occupy residues Val24–His44, Pro45–Leu65, Val107–Phe127, Ile145–Gly165, Val172–Phe192, Trp234–Val254, and Leu277–Leu297.

This sequence belongs to the UbiA prenyltransferase family. Protoheme IX farnesyltransferase subfamily.

Its subcellular location is the cell inner membrane. The enzyme catalyses heme b + (2E,6E)-farnesyl diphosphate + H2O = Fe(II)-heme o + diphosphate. The protein operates within porphyrin-containing compound metabolism; heme O biosynthesis; heme O from protoheme: step 1/1. Its function is as follows. Converts heme B (protoheme IX) to heme O by substitution of the vinyl group on carbon 2 of heme B porphyrin ring with a hydroxyethyl farnesyl side group. In Novosphingobium aromaticivorans (strain ATCC 700278 / DSM 12444 / CCUG 56034 / CIP 105152 / NBRC 16084 / F199), this protein is Protoheme IX farnesyltransferase.